We begin with the raw amino-acid sequence, 179 residues long: Macro domain-containing protein XAC3343 (179 aa).

Positions 1–175 constitute a Macro domain; sequence MRIEVWQGDI…AYQQALATQE (175 aa).

The protein belongs to the MacroD-type family.

This is Macro domain-containing protein XAC3343 from Xanthomonas axonopodis pv. citri (strain 306).